Consider the following 262-residue polypeptide: uncharacterized protein (262 aa).

In terms of domain architecture, BTB spans 5-107 (PLISLDVEGV…MIEHKLRTFC (103 aa)). The CRIB domain maps to 182–195 (ISLPRNFTHIAHVG).

This is an uncharacterized protein from Caenorhabditis elegans.